A 195-amino-acid polypeptide reads, in one-letter code: Molybdenum cofactor guanylyltransferase (195 aa).

Residues 10–12 (LAG), K23, N51, D69, and D99 contribute to the GTP site. D99 is a Mg(2+) binding site.

The protein belongs to the MobA family. Monomer. Requires Mg(2+) as cofactor.

The protein resides in the cytoplasm. It catalyses the reaction Mo-molybdopterin + GTP + H(+) = Mo-molybdopterin guanine dinucleotide + diphosphate. Transfers a GMP moiety from GTP to Mo-molybdopterin (Mo-MPT) cofactor (Moco or molybdenum cofactor) to form Mo-molybdopterin guanine dinucleotide (Mo-MGD) cofactor. The chain is Molybdenum cofactor guanylyltransferase from Histophilus somni (strain 129Pt) (Haemophilus somnus).